Consider the following 384-residue polypeptide: Dual-specificity RNA methyltransferase RlmN (384 aa).

Glu93 acts as the Proton acceptor in catalysis. Residues 99–339 (EETRGTLCVS…TTIRKTRGDD (241 aa)) form the Radical SAM core domain. Cysteines 106 and 344 form a disulfide. Residues Cys113, Cys117, and Cys120 each contribute to the [4Fe-4S] cluster site. Residues 170 to 171 (GE), Ser202, 224 to 226 (SLH), and Asn301 each bind S-adenosyl-L-methionine. Catalysis depends on Cys344, which acts as the S-methylcysteine intermediate.

Belongs to the radical SAM superfamily. RlmN family. [4Fe-4S] cluster is required as a cofactor.

Its subcellular location is the cytoplasm. It catalyses the reaction adenosine(2503) in 23S rRNA + 2 reduced [2Fe-2S]-[ferredoxin] + 2 S-adenosyl-L-methionine = 2-methyladenosine(2503) in 23S rRNA + 5'-deoxyadenosine + L-methionine + 2 oxidized [2Fe-2S]-[ferredoxin] + S-adenosyl-L-homocysteine. The enzyme catalyses adenosine(37) in tRNA + 2 reduced [2Fe-2S]-[ferredoxin] + 2 S-adenosyl-L-methionine = 2-methyladenosine(37) in tRNA + 5'-deoxyadenosine + L-methionine + 2 oxidized [2Fe-2S]-[ferredoxin] + S-adenosyl-L-homocysteine. Functionally, specifically methylates position 2 of adenine 2503 in 23S rRNA and position 2 of adenine 37 in tRNAs. m2A2503 modification seems to play a crucial role in the proofreading step occurring at the peptidyl transferase center and thus would serve to optimize ribosomal fidelity. This is Dual-specificity RNA methyltransferase RlmN from Cupriavidus necator (strain ATCC 17699 / DSM 428 / KCTC 22496 / NCIMB 10442 / H16 / Stanier 337) (Ralstonia eutropha).